Here is a 213-residue protein sequence, read N- to C-terminus: Protein Flattop (213 aa).

Residues 127–213 form a disordered region; it reads VDQPAEQSKI…HNSRPASQEK (87 aa). Over residues 151 to 213 the composition is skewed to polar residues; sequence QHIQDQSRPA…HNSRPASQEK (63 aa).

It belongs to the Flattop family.

It is found in the cytoplasm. The protein resides in the cytoskeleton. Its subcellular location is the cilium basal body. The protein localises to the cell projection. It localises to the cilium. It is found in the apical cell membrane. The protein resides in the cilium axoneme. In terms of biological role, microtubule inner protein (MIP) part of the dynein-decorated doublet microtubules (DMTs) in cilia axoneme. Acts as a regulator of cilium basal body docking and positioning in mono- and multiciliated cells. Regulates basal body docking and cilia formation in multiciliated lung cells. Regulates kinocilium positioning and stereocilia bundle morphogenesis in the inner ear. The chain is Protein Flattop from Danio rerio (Zebrafish).